Reading from the N-terminus, the 631-residue chain is Chaperone protein DnaK (631 aa).

Residue T198 is modified to Phosphothreonine; by autocatalysis. Positions 598–631 (YSAQQGGEQPGAAKKDDVVDAEFTEVDDDKKKSA) are disordered.

The protein belongs to the heat shock protein 70 family.

Acts as a chaperone. The sequence is that of Chaperone protein DnaK from Azorhizobium caulinodans (strain ATCC 43989 / DSM 5975 / JCM 20966 / LMG 6465 / NBRC 14845 / NCIMB 13405 / ORS 571).